Here is an 87-residue protein sequence, read N- to C-terminus: Small ribosomal subunit protein eS21 (87 aa).

Methionine 1 carries the post-translational modification N-acetylmethionine.

The protein belongs to the eukaryotic ribosomal protein eS21 family. As to quaternary structure, component of the small ribosomal subunit (SSU). Mature yeast ribosomes consist of a small (40S) and a large (60S) subunit. The 40S small subunit contains 1 molecule of ribosomal RNA (18S rRNA) and at least 33 different proteins. The large 60S subunit contains 3 rRNA molecules (25S, 5.8S and 5S rRNA) and at least 46 different proteins. Interacts with uS2A and uS2B, strongest interaction is with uS2B.

It localises to the cytoplasm. It is found in the nucleus. Its function is as follows. Component of the ribosome, a large ribonucleoprotein complex responsible for the synthesis of proteins in the cell. The small ribosomal subunit (SSU) binds messenger RNAs (mRNAs) and translates the encoded message by selecting cognate aminoacyl-transfer RNA (tRNA) molecules. The large subunit (LSU) contains the ribosomal catalytic site termed the peptidyl transferase center (PTC), which catalyzes the formation of peptide bonds, thereby polymerizing the amino acids delivered by tRNAs into a polypeptide chain. The nascent polypeptides leave the ribosome through a tunnel in the LSU and interact with protein factors that function in enzymatic processing, targeting, and the membrane insertion of nascent chains at the exit of the ribosomal tunnel. eS21 is required for the processing of the 20S rRNA-precursor to mature 18S rRNA in a late step of the maturation of 40S ribosomal subunits. Has a physiological role leading to 18S rRNA stability. The sequence is that of Small ribosomal subunit protein eS21 (rps21) from Schizosaccharomyces pombe (strain 972 / ATCC 24843) (Fission yeast).